The sequence spans 757 residues: 5-methyltetrahydropteroyltriglutamate--homocysteine methyltransferase (757 aa).

Residues 16 to 19 (RELK) and Lys-112 each bind 5-methyltetrahydropteroyltri-L-glutamate. Residues 433–435 (IGS) and Glu-486 each bind L-homocysteine. L-methionine is bound by residues 433–435 (IGS) and Glu-486. 5-methyltetrahydropteroyltri-L-glutamate is bound by residues 517 to 518 (RC) and Trp-563. Asp-601 serves as a coordination point for L-homocysteine. Asp-601 is an L-methionine binding site. Glu-607 serves as a coordination point for 5-methyltetrahydropteroyltri-L-glutamate. Zn(2+)-binding residues include His-643, Cys-645, and Glu-667. Residue His-696 is the Proton donor of the active site. Cys-728 contributes to the Zn(2+) binding site.

This sequence belongs to the vitamin-B12 independent methionine synthase family. It depends on Zn(2+) as a cofactor.

It catalyses the reaction 5-methyltetrahydropteroyltri-L-glutamate + L-homocysteine = tetrahydropteroyltri-L-glutamate + L-methionine. It functions in the pathway amino-acid biosynthesis; L-methionine biosynthesis via de novo pathway; L-methionine from L-homocysteine (MetE route): step 1/1. In terms of biological role, catalyzes the transfer of a methyl group from 5-methyltetrahydrofolate to homocysteine resulting in methionine formation. The polypeptide is 5-methyltetrahydropteroyltriglutamate--homocysteine methyltransferase (Histophilus somni (strain 2336) (Haemophilus somnus)).